We begin with the raw amino-acid sequence, 269 residues long: Protein TORNADO 2 (269 aa).

The Cytoplasmic portion of the chain corresponds to 1–10 (MPLSNNVIGC). The chain crosses the membrane as a helical span at residues 11-31 (INFITVLLSIPVIGAGIWLAI). Topologically, residues 32–44 (GTVNSCVKLLQWP) are extracellular. A helical membrane pass occupies residues 45–65 (VIILGVLILLVGLAGFIGGFW). Over 66–71 (RITWLL) the chain is Cytoplasmic. A helical membrane pass occupies residues 72–92 (VVYLIAMLILIVLLGCLVGFI). Over 93–231 (YMVTIRGSGH…NIKVDWLKAD (139 aa)) the chain is Extracellular. N-linked (GlcNAc...) asparagine glycosylation is present at N200. Residues 232–252 (IFLLLALIGLIIVYIIGCCAF) form a helical membrane-spanning segment. Residues 253–269 (RNAETEDIFRKYKQGYT) lie on the Cytoplasmic side of the membrane.

It belongs to the tetraspanin (TM4SF) family. In terms of tissue distribution, expressed in seedlings, roots, leaves, stems, apex, siliques and flowers. Present in ovules, prominently in nucellus and integuments.

It is found in the membrane. Involved in the basipetal transport of auxin (IAA) that modulates growth and organs organization, as well as cell differentiation. Regulates shoot apical meristem (SAM) organization in the peripheral zone. Required for initial meristematic divisions in the epidermal/lateral root cap leading to the formation of epidermal cells and a clone of lateral root cap cells, as well as for the maintenance of the radial pattern of cell specification in the root, thus regulating the distinction between the lateral root cap and epidermis. Together with WIH peptides, promotes megasporogenesis. This chain is Protein TORNADO 2 (TRN2), found in Arabidopsis thaliana (Mouse-ear cress).